The sequence spans 107 residues: Putative double-stranded DNA mimic protein YE2228 (107 aa).

Belongs to the putative dsDNA mimic protein family.

Its function is as follows. May act as a double-stranded DNA (dsDNA) mimic. Probably regulates the activity of a dsDNA-binding protein. This is Putative double-stranded DNA mimic protein YE2228 from Yersinia enterocolitica serotype O:8 / biotype 1B (strain NCTC 13174 / 8081).